We begin with the raw amino-acid sequence, 383 residues long: Cyclin-D4-2 (383 aa).

Over residues 51-62 the composition is skewed to gly residues; sequence AAGGGGGSGGGG. 3 disordered regions span residues 51-70, 313-335, and 354-383; these read AAGG…EDMF, QPKP…PESP, and ATIA…KLSR. Residues 323-335 are compositionally biased toward low complexity; it reads SASASSSSVPESP.

This sequence belongs to the cyclin family. Cyclin D subfamily.

This Oryza sativa subsp. japonica (Rice) protein is Cyclin-D4-2 (CYCD4-2).